The chain runs to 363 residues: NADH-quinone oxidoreductase subunit H (363 aa).

9 helical membrane passes run glycine 62 to phenylalanine 82, alanine 94 to valine 114, valine 127 to glycine 147, valine 166 to serine 186, phenylalanine 202 to valine 222, isoleucine 239 to leucine 257, isoleucine 264 to valine 286, leucine 293 to alanine 313, and phenylalanine 339 to isoleucine 359.

The protein belongs to the complex I subunit 1 family. In terms of assembly, NDH-1 is composed of 14 different subunits. Subunits NuoA, H, J, K, L, M, N constitute the membrane sector of the complex.

It localises to the cell inner membrane. The enzyme catalyses a quinone + NADH + 5 H(+)(in) = a quinol + NAD(+) + 4 H(+)(out). Functionally, NDH-1 shuttles electrons from NADH, via FMN and iron-sulfur (Fe-S) centers, to quinones in the respiratory chain. The immediate electron acceptor for the enzyme in this species is believed to be ubiquinone. Couples the redox reaction to proton translocation (for every two electrons transferred, four hydrogen ions are translocated across the cytoplasmic membrane), and thus conserves the redox energy in a proton gradient. This subunit may bind ubiquinone. This is NADH-quinone oxidoreductase subunit H from Xylella fastidiosa (strain 9a5c).